We begin with the raw amino-acid sequence, 311 residues long: p-hydroxybenzoic acid efflux pump subunit AaeA (311 aa).

A helical membrane pass occupies residues 11–31 (VGITVLVVVLAVIAIFNVWAF).

Belongs to the membrane fusion protein (MFP) (TC 8.A.1) family.

It is found in the cell inner membrane. Its function is as follows. Forms an efflux pump with AaeB. In Yersinia pestis bv. Antiqua (strain Antiqua), this protein is p-hydroxybenzoic acid efflux pump subunit AaeA.